Here is a 153-residue protein sequence, read N- to C-terminus: Probable phospholipase A2 homolog 2 (153 aa).

A signal peptide spans 1–25; sequence MRFFLKLAPRCSVLLLLLLVTASRG. Intrachain disulfides connect Cys-42–Cys-70, Cys-46–Cys-76, Cys-51–Cys-123, Cys-63–Cys-83, Cys-82–Cys-109, and Cys-89–Cys-102. The Ca(2+) site is built by Tyr-62, Gly-64, and Tyr-67. The active site involves His-86. Ca(2+) is bound at residue Asp-87.

It belongs to the phospholipase A2 family. It depends on Ca(2+) as a cofactor.

It is found in the secreted. The catalysed reaction is a 1,2-diacyl-sn-glycero-3-phosphocholine + H2O = a 1-acyl-sn-glycero-3-phosphocholine + a fatty acid + H(+). PA2 catalyzes the calcium-dependent hydrolysis of the 2-acyl groups in 3-sn-phosphoglycerides. Releases lysophospholipids (LPLs) and free fatty acids (FFAs) from membrane phospholipids in response to hormones and other external stimuli. The chain is Probable phospholipase A2 homolog 2 (PLA2-II) from Oryza sativa subsp. japonica (Rice).